We begin with the raw amino-acid sequence, 440 residues long: Probable secretory pathway GDP dissociation inhibitor 1 (440 aa).

This sequence belongs to the Rab GDI family.

In Schizosaccharomyces pombe (strain 972 / ATCC 24843) (Fission yeast), this protein is Probable secretory pathway GDP dissociation inhibitor 1 (gdi1).